We begin with the raw amino-acid sequence, 446 residues long: Xylose isomerase 2 (446 aa).

Active-site residues include H109 and D112. E240, E276, H279, D304, D315, D317, and D347 together coordinate Mg(2+).

The protein belongs to the xylose isomerase family. In terms of assembly, homotetramer. The cofactor is Mg(2+).

The protein resides in the cytoplasm. The catalysed reaction is alpha-D-xylose = alpha-D-xylulofuranose. The polypeptide is Xylose isomerase 2 (Xanthomonas campestris pv. campestris (strain 8004)).